We begin with the raw amino-acid sequence, 308 residues long: GTP-binding protein RAD (308 aa).

Positions 1-15 (MTLNGGSGASGSRGA) are enriched in gly residues. The segment at 1–86 (MTLNGGSGAS…SDSLSSGGSG (86 aa)) is disordered. Arg24 is subject to Omega-N-methylarginine. Ser26 carries the post-translational modification Phosphoserine. Positions 57-82 (ATTAAGTRTQGQRLDWPEGSSDSLSS) are enriched in low complexity. Residues 98–105 (GAPGVGKS) and 203–206 (NKSD) each bind GTP. The segment at 278 to 297 (AKRFLGRIVARNSRKMAFRA) is calmodulin-binding.

It belongs to the small GTPase superfamily. RGK family. As to quaternary structure, interacts with Calmodulin preferentially in the inactive, GDP-bound form. Interacts with CAMK2D. Interacts with CACNB2; interaction may be involved in beta-adrenergic regulation of heart rate and contractile force. Interaction with CACNB2 regulates the trafficking of CACNA1C to the cell membrane. Post-translationally, phosphorylation at Ser-26, Ser-39, Ser-273 and Ser-301 may be involved in regulating inhibition of voltage-gated L-type Ca(2+) channels.

The protein resides in the cell membrane. Its function is as follows. May regulate basal voltage-dependent L-type Ca(2+) currents and be required for beta-adrenergic augmentation of Ca(2+) influx in cardiomyocytes, thereby regulating increases in heart rate and contractile force. May play an important role in cardiac antiarrhythmia via the strong suppression of voltage-dependent L-type Ca(2+) currents. Regulates voltage-gated L-type calcium channel subunit alpha-1C trafficking to the cell membrane. Inhibits cardiac hypertrophy through the calmodulin-dependent kinase II (CaMKII) pathway. Inhibits phosphorylation and activation of CAMK2D. This chain is GTP-binding protein RAD (Rrad), found in Mus musculus (Mouse).